A 443-amino-acid chain; its full sequence is ATP-dependent protease ATPase subunit HslU (443 aa).

Residues I20, 62–67 (GVGKTE), D255, E321, and R393 contribute to the ATP site.

It belongs to the ClpX chaperone family. HslU subfamily. In terms of assembly, a double ring-shaped homohexamer of HslV is capped on each side by a ring-shaped HslU homohexamer. The assembly of the HslU/HslV complex is dependent on binding of ATP.

The protein resides in the cytoplasm. In terms of biological role, ATPase subunit of a proteasome-like degradation complex; this subunit has chaperone activity. The binding of ATP and its subsequent hydrolysis by HslU are essential for unfolding of protein substrates subsequently hydrolyzed by HslV. HslU recognizes the N-terminal part of its protein substrates and unfolds these before they are guided to HslV for hydrolysis. The sequence is that of ATP-dependent protease ATPase subunit HslU from Helicobacter pylori (strain HPAG1).